Consider the following 51-residue polypeptide: Large ribosomal subunit protein eL39 (51 aa).

Residues 1–23 (MSALKKSFIKRKLAKKQKQNRPM) are disordered. Residues 7–19 (SFIKRKLAKKQKQ) are compositionally biased toward basic residues.

The protein belongs to the eukaryotic ribosomal protein eL39 family. In terms of assembly, interacts with impact.

This Caenorhabditis elegans protein is Large ribosomal subunit protein eL39 (rpl-39).